The following is a 406-amino-acid chain: Cysteine desulfurase (406 aa).

N6-(pyridoxal phosphate)lysine is present on K226. C364 (cysteine persulfide intermediate) is an active-site residue.

Belongs to the class-V pyridoxal-phosphate-dependent aminotransferase family. Csd subfamily. In terms of assembly, homodimer. Interacts with SufE and the SufBCD complex composed of SufB, SufC and SufD. The interaction with SufE is required to mediate the direct transfer of the sulfur atom from the S-sulfanylcysteine. The cofactor is pyridoxal 5'-phosphate.

The protein resides in the cytoplasm. It catalyses the reaction (sulfur carrier)-H + L-cysteine = (sulfur carrier)-SH + L-alanine. The enzyme catalyses L-selenocysteine + AH2 = hydrogenselenide + L-alanine + A + H(+). It functions in the pathway cofactor biosynthesis; iron-sulfur cluster biosynthesis. Its function is as follows. Cysteine desulfurases mobilize the sulfur from L-cysteine to yield L-alanine, an essential step in sulfur metabolism for biosynthesis of a variety of sulfur-containing biomolecules. Component of the suf operon, which is activated and required under specific conditions such as oxidative stress and iron limitation. Acts as a potent selenocysteine lyase in vitro, that mobilizes selenium from L-selenocysteine. Selenocysteine lyase activity is however unsure in vivo. This Salmonella gallinarum (strain 287/91 / NCTC 13346) protein is Cysteine desulfurase.